The following is a 542-amino-acid chain: MDGRCLHNIMYTGTYDEIMRAINIYEHRNYSSFRNLPLHYAIYSRRKDIVETLLKSGYDPNSVDITDNNCLQLLSMPFDITMLPVDEEVQDYAISFYLSKNMKHTSMLIPITKEALRGNRYPSEPYFSSMCRKFKDNELCIMDLLLRYGALPNSRKDGLLPLYHAAAAGNTEMVELLLSYGAKTNLHTRYEDSIFMCAIKSNNVKTAKIISDLYNYKNDINNILKTIQLYNADMLLFLIEIGLDINTKDKKGKTALHYACNSINCIETVKEIMKYGADINVKDREGLTPLHSACKYGDLKLSKLLIEYGADVKVKTTSTVLNLAVESGNVELVKFLIEKNPEFITSDYLSLSLAIRCKDINIVLLLLDAGMDVNSSKCISTPLHLGVILGNSNIVKLLLDHGANINAIDKYGETPLEAANKRINIDYAELYKSNRFIIKYLVFLSRYDYKIKNNIGFIKNMYIIDKDETLSCFRNMCETELDKISSIKIGQYSLYSLLASDNDVKEYICKNRQEITQKIIDNLKDIIIYRSFIEKYISRINI.

ANK repeat units follow at residues 33 to 62 (FRNLPLHYAIYSRRKDIVETLLKSGYDPNS), 157 to 186 (DGLLPLYHAAAAGNTEMVELLLSYGAKTNL), 218 to 247 (NDINNILKTIQLYNADMLLFLIEIGLDINT), 251 to 281 (KGKTALHYACNSINCIETVKEIMKYGADINV), 285 to 314 (EGLTPLHSACKYGDLKLSKLLIEYGADVKV), 316 to 345 (TTSTVLNLAVESGNVELVKFLIEKNPEFIT), 347 to 375 (DYLSLSLAIRCKDINIVLLLLDAGMDVNS), and 378 to 407 (CISTPLHLGVILGNSNIVKLLLDHGANINA).

This chain is Putative ankyrin repeat protein FPV115, found in Fowlpox virus (strain NVSL) (FPV).